The following is a 371-amino-acid chain: Tetraacyldisaccharide 4'-kinase (371 aa).

48–55 (SAGGTGKT) lines the ATP pocket.

Belongs to the LpxK family.

The catalysed reaction is a lipid A disaccharide + ATP = a lipid IVA + ADP + H(+). It functions in the pathway glycolipid biosynthesis; lipid IV(A) biosynthesis; lipid IV(A) from (3R)-3-hydroxytetradecanoyl-[acyl-carrier-protein] and UDP-N-acetyl-alpha-D-glucosamine: step 6/6. Its function is as follows. Transfers the gamma-phosphate of ATP to the 4'-position of a tetraacyldisaccharide 1-phosphate intermediate (termed DS-1-P) to form tetraacyldisaccharide 1,4'-bis-phosphate (lipid IVA). In Chlorobium chlorochromatii (strain CaD3), this protein is Tetraacyldisaccharide 4'-kinase.